A 313-amino-acid polypeptide reads, in one-letter code: B3 domain-containing protein At2g31720 (313 aa).

A disordered region spans residues 80 to 110; the sequence is KNQDPEQNPNRVASSPSSCHLESKRPQKVVS. The segment covering 84 to 99 has biased composition (polar residues); it reads PEQNPNRVASSPSSCH. Positions 169–267 form a DNA-binding region, TF-B3; the sequence is WKQILDMDFL…MLFFAFVLSD (99 aa).

The protein resides in the nucleus. The protein is B3 domain-containing protein At2g31720 (ARF70) of Arabidopsis thaliana (Mouse-ear cress).